The following is a 266-amino-acid chain: Lipooligosaccharide biosynthesis protein lic2B (266 aa).

The protein belongs to the glycosyltransferase 25 family.

Functionally, involved in extracellular lipooligosaccharide (LOS) biosynthesis and virulence expression. Involved in the synthesis of the oligosaccharide moiety of the LOS molecule by adding GalNAc. The sequence is that of Lipooligosaccharide biosynthesis protein lic2B (lic2B) from Haemophilus influenzae.